Reading from the N-terminus, the 258-residue chain is Probable glycerol uptake facilitator protein (258 aa).

Helical transmembrane passes span 11–31 (WWFL…NGAV) and 50–70 (TVAL…NAIF). The NPA 1 signature appears at 77–79 (NPA). 3 helical membrane passes run 95–115 (ALIW…AMIA), 152–172 (FLTE…ASHF), and 180–200 (VPPG…FGGA). Positions 206-208 (NPA) match the NPA 2 motif. Residues 233–253 (WIPVIAPLSAGLVLSIIIGFS) form a helical membrane-spanning segment.

Belongs to the MIP/aquaporin (TC 1.A.8) family.

It is found in the cell membrane. The enzyme catalyses glycerol(in) = glycerol(out). Mediates glycerol diffusion across the cytoplasmic membrane via a pore-type mechanism. In Mycoplasma genitalium (strain ATCC 33530 / DSM 19775 / NCTC 10195 / G37) (Mycoplasmoides genitalium), this protein is Probable glycerol uptake facilitator protein (glpF).